The chain runs to 124 residues: Large ribosomal subunit protein mL51 (124 aa).

A mitochondrion-targeting transit peptide spans 1–31 (MSVFGGLWRSAVNLCQSSRLFSTGSCARIRM).

The protein belongs to the mitochondrion-specific ribosomal protein mL51 family. In terms of assembly, component of the mitochondrial ribosome large subunit (39S) which comprises a 16S rRNA and about 50 distinct proteins.

It is found in the mitochondrion. This chain is Large ribosomal subunit protein mL51 (mrpl51), found in Danio rerio (Zebrafish).